We begin with the raw amino-acid sequence, 82 residues long: Small ribosomal subunit protein eS27 (82 aa).

A C4-type zinc finger spans residues 37 to 59; it reads CPGCFTITTVFSHAQTVVICQGC.

The protein belongs to the eukaryotic ribosomal protein eS27 family. In terms of assembly, component of the small ribosomal subunit (SSU). Mature N.crassa ribosomes consist of a small (40S) and a large (60S) subunit. The 40S small subunit contains 1 molecule of ribosomal RNA (18S rRNA) and at least 32 different proteins. The large 60S subunit contains 3 rRNA molecules (26S, 5.8S and 5S rRNA) and at least 42 different proteins. The cofactor is Zn(2+).

The protein localises to the cytoplasm. In terms of biological role, component of the ribosome, a large ribonucleoprotein complex responsible for the synthesis of proteins in the cell. The small ribosomal subunit (SSU) binds messenger RNAs (mRNAs) and translates the encoded message by selecting cognate aminoacyl-transfer RNA (tRNA) molecules. The large subunit (LSU) contains the ribosomal catalytic site termed the peptidyl transferase center (PTC), which catalyzes the formation of peptide bonds, thereby polymerizing the amino acids delivered by tRNAs into a polypeptide chain. The nascent polypeptides leave the ribosome through a tunnel in the LSU and interact with protein factors that function in enzymatic processing, targeting, and the membrane insertion of nascent chains at the exit of the ribosomal tunnel. The chain is Small ribosomal subunit protein eS27 (crp-6) from Neurospora crassa (strain ATCC 24698 / 74-OR23-1A / CBS 708.71 / DSM 1257 / FGSC 987).